A 490-amino-acid chain; its full sequence is Protein nucleotidyltransferase YdiU (490 aa).

The ATP site is built by glycine 94, glycine 96, arginine 97, lysine 117, aspartate 129, glycine 130, arginine 180, and arginine 187. Aspartate 256 serves as the catalytic Proton acceptor. Residues asparagine 257 and aspartate 266 each contribute to the Mg(2+) site. Residue aspartate 266 coordinates ATP.

This sequence belongs to the SELO family. It depends on Mg(2+) as a cofactor. The cofactor is Mn(2+).

The catalysed reaction is L-seryl-[protein] + ATP = 3-O-(5'-adenylyl)-L-seryl-[protein] + diphosphate. It carries out the reaction L-threonyl-[protein] + ATP = 3-O-(5'-adenylyl)-L-threonyl-[protein] + diphosphate. The enzyme catalyses L-tyrosyl-[protein] + ATP = O-(5'-adenylyl)-L-tyrosyl-[protein] + diphosphate. It catalyses the reaction L-histidyl-[protein] + UTP = N(tele)-(5'-uridylyl)-L-histidyl-[protein] + diphosphate. The catalysed reaction is L-seryl-[protein] + UTP = O-(5'-uridylyl)-L-seryl-[protein] + diphosphate. It carries out the reaction L-tyrosyl-[protein] + UTP = O-(5'-uridylyl)-L-tyrosyl-[protein] + diphosphate. Functionally, nucleotidyltransferase involved in the post-translational modification of proteins. It can catalyze the addition of adenosine monophosphate (AMP) or uridine monophosphate (UMP) to a protein, resulting in modifications known as AMPylation and UMPylation. The sequence is that of Protein nucleotidyltransferase YdiU from Clostridium perfringens (strain ATCC 13124 / DSM 756 / JCM 1290 / NCIMB 6125 / NCTC 8237 / Type A).